We begin with the raw amino-acid sequence, 878 residues long: Indoleacetate decarboxylase (878 aa).

Residues 42–750 (DRTKRMKERF…VTGATPDGRL (709 aa)) form the PFL domain. Residue cysteine 500 is the Cysteine radical intermediate of the active site. Residue glutamate 502 is the Proton acceptor of the active site. Residues 758–878 (GILSASPGTD…VIARTEYDAL (121 aa)) enclose the Glycine radical domain. At glycine 853 the chain carries Glycine radical.

The protein belongs to the glycyl radical enzyme (GRE) family. Homodimer (predominantly) and monomer. Post-translationally, requires the activating protein OsIADAE to generate the key active site glycyl radical on Gly-853 that is involved in catalysis.

The enzyme catalyses (indol-3-yl)acetate + H(+) = skatole + CO2. It participates in amino-acid degradation. Functionally, glycyl radical enzyme that catalyzes the terminal step of tryptophan fermentation, the decarboxylation of indoleacetate to form skatole, a malodorous compound that contributes to the characteristic smell of animal feces. No activity is detected with phenylacetate or p-hydroxyphenylacetate as substrates, indicating high substrate specificity. This is Indoleacetate decarboxylase from Tractidigestivibacter scatoligenes (Olsenella scatoligenes).